The sequence spans 332 residues: Methionyl-tRNA formyltransferase (332 aa).

Residue 124–127 (SLLP) participates in (6S)-5,6,7,8-tetrahydrofolate binding.

This sequence belongs to the Fmt family.

It carries out the reaction L-methionyl-tRNA(fMet) + (6R)-10-formyltetrahydrofolate = N-formyl-L-methionyl-tRNA(fMet) + (6S)-5,6,7,8-tetrahydrofolate + H(+). Its function is as follows. Attaches a formyl group to the free amino group of methionyl-tRNA(fMet). The formyl group appears to play a dual role in the initiator identity of N-formylmethionyl-tRNA by promoting its recognition by IF2 and preventing the misappropriation of this tRNA by the elongation apparatus. This chain is Methionyl-tRNA formyltransferase, found in Polynucleobacter asymbioticus (strain DSM 18221 / CIP 109841 / QLW-P1DMWA-1) (Polynucleobacter necessarius subsp. asymbioticus).